A 98-amino-acid chain; its full sequence is DNA-binding protein Fis (98 aa).

The segment at residues Gln74–Lys93 is a DNA-binding region (H-T-H motif).

The protein belongs to the transcriptional regulatory Fis family. As to quaternary structure, homodimer.

In terms of biological role, activates ribosomal RNA transcription. Plays a direct role in upstream activation of rRNA promoters. The sequence is that of DNA-binding protein Fis from Photorhabdus laumondii subsp. laumondii (strain DSM 15139 / CIP 105565 / TT01) (Photorhabdus luminescens subsp. laumondii).